Reading from the N-terminus, the 216-residue chain is Adenylate kinase (216 aa).

10–15 (GAGKGT) is a binding site for ATP. The segment at 30 to 59 (STGDMFRAAMKAETELGLQAKSFIDKGALV) is NMP. AMP-binding positions include Thr31, Arg36, 57–59 (ALV), 85–88 (GFPR), and Gln92. Residues 126 to 163 (GRRICKECGATYHLEFNPPAKADVCDKCGGELYQRSDD) are LID. Arg127 serves as a coordination point for ATP. 2 residues coordinate Zn(2+): Cys130 and Cys133. 136-137 (TY) contributes to the ATP binding site. 2 residues coordinate Zn(2+): Cys150 and Cys153. AMP contacts are provided by Arg160 and Arg171. Gln199 is a binding site for ATP.

Belongs to the adenylate kinase family. As to quaternary structure, monomer.

It localises to the cytoplasm. The enzyme catalyses AMP + ATP = 2 ADP. It functions in the pathway purine metabolism; AMP biosynthesis via salvage pathway; AMP from ADP: step 1/1. In terms of biological role, catalyzes the reversible transfer of the terminal phosphate group between ATP and AMP. Plays an important role in cellular energy homeostasis and in adenine nucleotide metabolism. In Bacillus mycoides (strain KBAB4) (Bacillus weihenstephanensis), this protein is Adenylate kinase.